Consider the following 188-residue polypeptide: EP300-interacting inhibitor of differentiation 1 (188 aa).

The tract at residues 1–122 (MSEMAELSEL…PEEEQLSGAG (122 aa)) is disordered. 2 stretches are compositionally biased toward acidic residues: residues 53 to 64 (LEEEGPMEEEEA) and 94 to 117 (FESE…EEEQ). The segment at 55–121 (EEGPMEEEEA…YPEEEQLSGA (67 aa)) is interaction with NR0B2. The LXCXE motif motif lies at 179–183 (LGCDE).

In terms of assembly, interacts via its LXCXE motif with the entire pocket region of RB1. Interacts with EP300, NR0B2 and TRIM27.

It is found in the nucleus. It localises to the cytoplasm. In terms of biological role, interacts with RB1 and EP300 and acts as a repressor of MYOD1 transactivation. Inhibits EP300 and CBP histone acetyltransferase activity. May be involved in coupling cell cycle exit to the transcriptional activation of genes required for cellular differentiation. May act as a candidate coinhibitory factor for NR0B2 that can be directly linked to transcription inhibitory mechanisms. This is EP300-interacting inhibitor of differentiation 1 from Pongo abelii (Sumatran orangutan).